The chain runs to 372 residues: MAEQETTSNINTINDQAEEETRTKSQPLISGLPNDIAELCLLRLPYPYHALYRSVSSSWNKTITNPRFLFSKQSLSISSPYLFVFAFNKSTARIQWQSLDLASGRWFVLPPMPNSFTKISSPHALSCASMPRQGKLFVLGGGDVNRSAVVYTALTNRWSCISPMMSPRTYFVSGNVNGKIMAVGGSVGGNGEATTEVESYDPDNDTWTVVKKLPMVLAKYDSAVIGKEMCVTEGWAWPFMFPPMGQVYDSDEGTWREMSGGMKEGWTGVSVVIRDRLFVISEHGDFPMKVYCSDDDTWRYVSGEKLQGEKMRRPFAVTGADDRVFVVASGINVAEGRVSEGQNGDFSVEWRMVSSPKSSIQFSPASCHVLYV.

The span at 1–15 (MAEQETTSNINTIND) shows a compositional bias: polar residues. A disordered region spans residues 1 to 27 (MAEQETTSNINTINDQAEEETRTKSQP). Positions 29 to 74 (ISGLPNDIAELCLLRLPYPYHALYRSVSSSWNKTITNPRFLFSKQS) constitute an F-box domain. Kelch repeat units follow at residues 80-126 (PYLF…HALS), 135-178 (KLFV…NVNG), 179-227 (KIMA…VIGK), 229-276 (MCVT…IRDR), and 279-325 (VISE…DRVF).

In terms of assembly, part of a SCF (ASK-cullin-F-box) protein ligase complex. Interacts with SKP1A.

It participates in protein modification; protein ubiquitination. Functionally, component of SCF (ASK-cullin-F-box) E3 ubiquitin ligase complexes, which may mediate the ubiquitination and subsequent proteasomal degradation of target proteins. Part of the phyA-mediated signaling transduction pathway leading to the regulation of gene expression and hypocotyls elongation in response to red and far-red light exposure. This chain is F-box protein AFR (AFR), found in Arabidopsis thaliana (Mouse-ear cress).